Consider the following 77-residue polypeptide: Short neurotoxin OH-32 (77 aa).

The signal sequence occupies residues 1–21; it reads MKNLLLTFLVVTIVCLDLGYT. Intrachain disulfides connect Cys-24–Cys-40, Cys-33–Cys-58, Cys-62–Cys-70, and Cys-71–Cys-76.

It belongs to the three-finger toxin family. Short-chain subfamily. As to expression, expressed by the venom gland.

It is found in the secreted. This three-finger toxin binds and inhibits the nicotinic acetylcholine receptor (nAChR). This is Short neurotoxin OH-32 from Ophiophagus hannah (King cobra).